Here is a 283-residue protein sequence, read N- to C-terminus: MSWLNKVRNALPFTPKRDTPDNLWIKCPSCSEMLFTKEYEDNLSVCPHCDHHGRIGANARLEQLLDAGYELLPAPKVKEDPLKFRDTKKYVDRIKAARAANPHPDALTNAFGRIEGQKAVVGVQEFAFMGGSMGMAVGNAFVAGTERAIKEKCPYVAVTAAGGARMQEGILSLMQMPRSTVAISRLHAAGLPYIVVLTDPTTGGVTASYAMLGDVQIAEPGALIGFAGQRVIQDTIREKLPEGFQRAEYLHAHGMIDMVTHRRDLKTTLAQVIDFLMAGKAAA.

Positions 23–283 (LWIKCPSCSE…DFLMAGKAAA (261 aa)) constitute a CoA carboxyltransferase N-terminal domain. Positions 27, 30, 46, and 49 each coordinate Zn(2+). The segment at 27 to 49 (CPSCSEMLFTKEYEDNLSVCPHC) adopts a C4-type zinc-finger fold.

It belongs to the AccD/PCCB family. In terms of assembly, acetyl-CoA carboxylase is a heterohexamer composed of biotin carboxyl carrier protein (AccB), biotin carboxylase (AccC) and two subunits each of ACCase subunit alpha (AccA) and ACCase subunit beta (AccD). Requires Zn(2+) as cofactor.

Its subcellular location is the cytoplasm. It catalyses the reaction N(6)-carboxybiotinyl-L-lysyl-[protein] + acetyl-CoA = N(6)-biotinyl-L-lysyl-[protein] + malonyl-CoA. It participates in lipid metabolism; malonyl-CoA biosynthesis; malonyl-CoA from acetyl-CoA: step 1/1. Component of the acetyl coenzyme A carboxylase (ACC) complex. Biotin carboxylase (BC) catalyzes the carboxylation of biotin on its carrier protein (BCCP) and then the CO(2) group is transferred by the transcarboxylase to acetyl-CoA to form malonyl-CoA. This chain is Acetyl-coenzyme A carboxylase carboxyl transferase subunit beta, found in Novosphingobium aromaticivorans (strain ATCC 700278 / DSM 12444 / CCUG 56034 / CIP 105152 / NBRC 16084 / F199).